Consider the following 236-residue polypeptide: CD81 antigen (236 aa).

The Cytoplasmic segment spans residues 1 to 12 (MGVEGCTKCIKY). The helical transmembrane segment at 13-33 (LLFVFNFVFWLAGGVILGVAL) threads the bilayer. Residues 34 to 63 (WLRHDPQTTNLLYLELGDRPAPNTFYVGIY) are Extracellular-facing. Residues 64–84 (ILIAVGAVMMFVGFLGCYGAI) traverse the membrane as a helical segment. Over 85–89 (QESQC) the chain is Cytoplasmic. The helical transmembrane segment at 90-112 (LLGTFFTCLVILFACEVAAGIWG) threads the bilayer. At 113–201 (FVNKDQIAKD…GKIDELFSGK (89 aa)) the chain is on the extracellular side. 2 disulfides stabilise this stretch: Cys-156-Cys-190 and Cys-157-Cys-175. Residues 202-224 (LYLIGIAAIVVAVIMIFEMILSM) form a helical membrane-spanning segment. A cholesterol-binding site is contributed by Glu-219. Topologically, residues 225–236 (VLCCGIRNSSVY) are cytoplasmic.

The protein belongs to the tetraspanin (TM4SF) family. Homodimer. Part of a complex composed of CD19, CR2/CD21, CD81 and IFITM1/CD225 in the membrane of mature B cells. Interacts (via the second extracellular domain) with CD19; this interaction is initiated early during biosynthesis in the ER and enables trafficking of only properly folded CD19. Part of a complex that includes MHC class II/HLA-DR molecules and IFITM1. Interacts with IFITM1. Interacts with IFITM2 and IFITM3. Part of integrin-tetraspanin complex composed of CD9, CD81, beta-1 and beta-2 integrins in the membrane of monocyte/macrophages. Interacts (via the second extracellular domain) with integrin ITGAV:ITGB3. Interacts with CD247/CD3 zeta, ICAM1 and CD9 at the immune synapse on T cell membrane. Part of a GPCR-tetraspanin complex consisting at least of ADGRG1, CD81, possibly CD9, and GNA11 in which CD81 enhances the association of ADGRG1 with GNA11. Part of a complex composed of CD9, CD81, PTGFRN and IGSF8. Interacts directly with IGSF8. Interacts with CD53 and SCIMP. Interacts with SAMHD1 (via its C-terminus). Interacts with glypican GPC3 and with the transcriptional repressor HHEX; binding to GPC3 decreases the availability of free CD81 for binding to HHEX, resulting in nuclear translocation of HHEX and transcriptional repression. Interacts with CLDN1. Interacts with CLDN6 and CLDN9. Not glycosylated. Post-translationally, likely constitutively palmitoylated at low levels. Protein palmitoylation is up-regulated upon coligation of BCR and CD9-C2R-CD81 complexes in lipid rafts.

It localises to the cell membrane. It is found in the basolateral cell membrane. Its function is as follows. Structural component of specialized membrane microdomains known as tetraspanin-enriched microdomains (TERMs), which act as platforms for receptor clustering and signaling. Essential for trafficking and compartmentalization of CD19 receptor on the surface of activated B cells. Upon initial encounter with microbial pathogens, enables the assembly of CD19-CR2/CD21 and B cell receptor (BCR) complexes at signaling TERMs, lowering the threshold dose of antigen required to trigger B cell clonal expansion and antibody production. In T cells, facilitates the localization of CD247/CD3 zeta at antigen-induced synapses with B cells, providing for costimulation and polarization toward T helper type 2 phenotype. Present in MHC class II compartments, may also play a role in antigen presentation. Can act both as positive and negative regulator of homotypic or heterotypic cell-cell fusion processes. Positively regulates sperm-egg fusion and may be involved in acrosome reaction. In myoblasts, associates with CD9 and PTGFRN and inhibits myotube fusion during muscle regeneration. In macrophages, associates with CD9 and beta-1 and beta-2 integrins, and prevents macrophage fusion into multinucleated giant cells specialized in ingesting complement-opsonized large particles. Also prevents the fusion of mononuclear cell progenitors into osteoclasts in charge of bone resorption. May regulate the compartmentalization of enzymatic activities. In T cells, defines the subcellular localization of dNTPase SAMHD1 and permits its degradation by the proteasome, thereby controlling intracellular dNTP levels. Also involved in cell adhesion and motility. Positively regulates integrin-mediated adhesion of macrophages, particularly relevant for the inflammatory response in the lung. The sequence is that of CD81 antigen (CD81) from Bos taurus (Bovine).